The sequence spans 327 residues: Eukaryotic translation initiation factor 3 subunit I (327 aa).

WD repeat units lie at residues 8–49 (GHDR…GTYD), 51–91 (HNGV…NSVS), 144–183 (SLQTQANSCVWTHLDDTVCVGNEKGNVHQYDIRKGDDIVN), 188–227 (AHKFQINDMQMSTDESFLITASKDKTARLFDARTLDCLKT), 229–268 (KAERPVNSAAISPIRDHVILGGGEEAMKVTQTTAASGHFE), and 285–324 (GHFGPINTLAFHPGGNCVVSGGEDGYVRIQEFDTDYLKFD).

This sequence belongs to the eIF-3 subunit I family. Component of the eukaryotic translation initiation factor 3 (eIF-3) complex.

The protein localises to the cytoplasm. In terms of biological role, component of the eukaryotic translation initiation factor 3 (eIF-3) complex, which is involved in protein synthesis of a specialized repertoire of mRNAs and, together with other initiation factors, stimulates binding of mRNA and methionyl-tRNAi to the 40S ribosome. The eIF-3 complex specifically targets and initiates translation of a subset of mRNAs involved in cell proliferation. In Brugia malayi (Filarial nematode worm), this protein is Eukaryotic translation initiation factor 3 subunit I.